The primary structure comprises 161 residues: Allophycocyanin alpha chain (161 aa).

An N4-methylasparagine modification is found at asparagine 71. Cysteine 81 is a binding site for (2R,3E)-phycocyanobilin.

Belongs to the phycobiliprotein family. In terms of assembly, heterodimer of an alpha and a beta chain. Contains one covalently linked phycocyanobilin chromophore.

The protein resides in the plastid. It localises to the chloroplast thylakoid membrane. In terms of biological role, light-harvesting photosynthetic bile pigment-protein from the phycobiliprotein complex. Allophycocyanin has a maximum absorption at approximately 650 nanometers. In Cyanidium caldarium (Red alga), this protein is Allophycocyanin alpha chain (apcA).